The following is a 75-amino-acid chain: Protein EGO2 (75 aa).

The chain is Protein EGO2 from Saccharomyces cerevisiae (strain ATCC 204508 / S288c) (Baker's yeast).